The sequence spans 222 residues: Uracil-DNA glycosylase (222 aa).

Catalysis depends on D61, which acts as the Proton acceptor.

This sequence belongs to the uracil-DNA glycosylase (UDG) superfamily. UNG family.

Its subcellular location is the cytoplasm. It catalyses the reaction Hydrolyzes single-stranded DNA or mismatched double-stranded DNA and polynucleotides, releasing free uracil.. Excises uracil residues from the DNA which can arise as a result of misincorporation of dUMP residues by DNA polymerase or due to deamination of cytosine. The chain is Uracil-DNA glycosylase from Aeromonas hydrophila subsp. hydrophila (strain ATCC 7966 / DSM 30187 / BCRC 13018 / CCUG 14551 / JCM 1027 / KCTC 2358 / NCIMB 9240 / NCTC 8049).